The sequence spans 436 residues: UPF0597 protein YhaM (436 aa).

This sequence belongs to the UPF0597 family.

The protein is UPF0597 protein YhaM of Shigella boydii serotype 4 (strain Sb227).